Consider the following 179-residue polypeptide: MARLKEIYRKEIAPKLKEELKLANVMEVPRITKITLNMGLGEAIGDKKVIENAVADLEKITGQKVVVTHARKSIAGFKVREGWPIGVKVTLRRERMYEFLDRLLSISLPRVRDFRGLNAKSFDGRGNYSMGVKEQIIFPEIDYDKIDALRGLDITLTTTARNDDEGRALLRAFNFPFRN.

The protein belongs to the universal ribosomal protein uL5 family. In terms of assembly, part of the 50S ribosomal subunit; part of the 5S rRNA/L5/L18/L25 subcomplex. Contacts the 5S rRNA and the P site tRNA. Forms a bridge to the 30S subunit in the 70S ribosome.

Functionally, this is one of the proteins that bind and probably mediate the attachment of the 5S RNA into the large ribosomal subunit, where it forms part of the central protuberance. In the 70S ribosome it contacts protein S13 of the 30S subunit (bridge B1b), connecting the 2 subunits; this bridge is implicated in subunit movement. Contacts the P site tRNA; the 5S rRNA and some of its associated proteins might help stabilize positioning of ribosome-bound tRNAs. This chain is Large ribosomal subunit protein uL5, found in Ectopseudomonas mendocina (strain ymp) (Pseudomonas mendocina).